A 293-amino-acid polypeptide reads, in one-letter code: Protease HtpX (293 aa).

The next 2 helical transmembrane spans lie at 4 to 24 (IALFLLTNLGVMVVFGLILSL) and 32 to 52 (VMGLMIMAGLFGFGGAFVSLL). Histidine 139 contributes to the Zn(2+) binding site. Residue glutamate 140 is part of the active site. Histidine 143 serves as a coordination point for Zn(2+). Transmembrane regions (helical) follow at residues 158-178 (IVNTFVIFISRILAQLAAGFM) and 193-213 (MVYFVVSMVLELVFGIVASTI). Residue glutamate 222 coordinates Zn(2+).

Belongs to the peptidase M48B family. It depends on Zn(2+) as a cofactor.

The protein localises to the cell inner membrane. The chain is Protease HtpX from Erwinia tasmaniensis (strain DSM 17950 / CFBP 7177 / CIP 109463 / NCPPB 4357 / Et1/99).